The chain runs to 266 residues: MTMEVDILELSDRSAKFVLSNVSTAFANGIRRAMVADVPTLAIEYVNLYDNTSVLYDEQLALRLSLIPLATDIETYLPQAECDVCGGEGCPACEVSLTLSAEGPGTVYSRDLISSDPKIQPADPNVPIVELKKGQKLVLEAIAHMGYGRDSVKWQAGVACGYKNMPVITIENCDACGHCAAECPKGIISVEEAGAKIAEEDIMKCSICRLCEQVCDINAIKVDFYENSFVFTMESDGSYTAKDLVLNAANVIKGKAEEMLAILDQL.

3 residues coordinate [3Fe-4S] cluster: cysteine 205, cysteine 208, and cysteine 211.

Belongs to the archaeal Rpo3/eukaryotic RPB3 RNA polymerase subunit family. In terms of assembly, part of the RNA polymerase complex. Requires [3Fe-4S] cluster as cofactor.

Its subcellular location is the cytoplasm. The catalysed reaction is RNA(n) + a ribonucleoside 5'-triphosphate = RNA(n+1) + diphosphate. Its function is as follows. DNA-dependent RNA polymerase (RNAP) catalyzes the transcription of DNA into RNA using the four ribonucleoside triphosphates as substrates. The sequence is that of DNA-directed RNA polymerase subunit Rpo3 from Methanosarcina acetivorans (strain ATCC 35395 / DSM 2834 / JCM 12185 / C2A).